The primary structure comprises 444 residues: Trigger factor (444 aa).

The 86-residue stretch at 166–251 folds into the PPIase FKBP-type domain; it reads GDQIVIDFKG…VKAVKAPKPA (86 aa).

This sequence belongs to the FKBP-type PPIase family. Tig subfamily.

The protein localises to the cytoplasm. The enzyme catalyses [protein]-peptidylproline (omega=180) = [protein]-peptidylproline (omega=0). Functionally, involved in protein export. Acts as a chaperone by maintaining the newly synthesized protein in an open conformation. Functions as a peptidyl-prolyl cis-trans isomerase. The protein is Trigger factor of Cereibacter sphaeroides (strain ATCC 17025 / ATH 2.4.3) (Rhodobacter sphaeroides).